The following is a 224-amino-acid chain: TM2 domain-containing protein amaretto (224 aa).

The signal sequence occupies residues 1-18 (MRIFYGLLAFLVARQHDA). Topologically, residues 19-154 (QAIQARSDKE…FLRAGVPCVR (136 aa)) are extracellular. N-linked (GlcNAc...) asparagine glycosylation is found at Asn-102 and Asn-142. Residues 155–175 (YTDHYFVTTLIYSMLLGFLGM) form a helical membrane-spanning segment. Residues 157–205 (DHYFVTTLIYSMLLGFLGMDRFCLGQTGTAVGKLLTMGGVGVWWIIDVI) form the TM2 domain. Topologically, residues 176–189 (DRFCLGQTGTAVGK) are cytoplasmic. A helical membrane pass occupies residues 190–210 (LLTMGGVGVWWIIDVILLITN). Over 211–224 (NLLPEDGSNWNPYV) the chain is Extracellular.

It belongs to the TM2 family.

It is found in the membrane. In terms of biological role, positive regulator of Notch signaling. Maternal neurogenic factor involved in Notch signaling-dependent neuroectodermal specification during early embryogenesis. Functions cooperatively with amx/TM2D3 and bisc/TM2D1. In Drosophila melanogaster (Fruit fly), this protein is TM2 domain-containing protein amaretto.